The following is a 47-amino-acid chain: uncharacterized protein (47 aa).

Residues 22-47 (VGPRTKRANQASPPVGRHSSRLMCPG) form a disordered region.

This is an uncharacterized protein from Saccharomyces cerevisiae (strain ATCC 204508 / S288c) (Baker's yeast).